Consider the following 157-residue polypeptide: MLSQSTLFLLLLMAIALIAKNQSLIIAISVLLLIKWTGLGDKVFPLMQAKGINLGVTIITIAVLVPIATGDIGFKQLGEATKSLYAWVALGSGIAVALVAASGIDLLKNDPHITAALVLGTIVAVSFLNGVAVGPLIGAGIAYLTMRAIQYIAQLWG.

The next 4 helical transmembrane spans lie at 8-28, 54-74, 84-104, and 117-137; these read FLLL…IIAI, LGVT…DIGF, LYAW…ASGI, and LVLG…GPLI.

This sequence belongs to the UPF0756 family.

The protein resides in the cell membrane. In Shouchella clausii (strain KSM-K16) (Alkalihalobacillus clausii), this protein is UPF0756 membrane protein ABC2716.